The sequence spans 236 residues: Rab-like protein 3 (236 aa).

Positions 1–236 are small GTPase-like; that stretch reads MASLDRVKVL…GGTLKSLHYD (236 aa). GTP contacts are provided by residues 16 to 21, 148 to 150, and 179 to 180; these read GVGKSS, KLD, and DC.

It belongs to the small GTPase superfamily. Rab family. Homodimer. Interacts with GPR89; the interaction stabilizes GPR89. Interacts with RAP1GDS1.

Functionally, required for KRAS signaling regulation and modulation of cell proliferation. Regulator of KRAS prenylation, and probably prenylation of other small GTPases. Required for lymphocyte development and function. Not required for myeloid cell development. This chain is Rab-like protein 3 (RABL3), found in Bos taurus (Bovine).